We begin with the raw amino-acid sequence, 231 residues long: Small ribosomal subunit protein uS2c (231 aa).

Belongs to the universal ribosomal protein uS2 family.

Its subcellular location is the plastid. The protein localises to the chloroplast. The polypeptide is Small ribosomal subunit protein uS2c (rps2) (Gracilaria tenuistipitata var. liui (Red alga)).